The sequence spans 906 residues: Protein translocase subunit SecA (906 aa).

Residues Gln87, 105 to 109 (GEGKT), and Asp521 contribute to the ATP site. The segment covering 849–865 (STATAAEPAPEASQSQS) has biased composition (low complexity). The tract at residues 849-897 (STATAAEPAPEASQSQSTNDATASQNPPITEVEASKVGRNQPCPCGSGK) is disordered. A compositionally biased stretch (polar residues) spans 866-876 (TNDATASQNPP). Residues Cys891, Cys893, Cys902, and Cys903 each contribute to the Zn(2+) site.

It belongs to the SecA family. Monomer and homodimer. Part of the essential Sec protein translocation apparatus which comprises SecA, SecYEG and auxiliary proteins SecDF-YajC and YidC. Requires Zn(2+) as cofactor.

The protein resides in the cell inner membrane. It localises to the cytoplasm. It catalyses the reaction ATP + H2O + cellular proteinSide 1 = ADP + phosphate + cellular proteinSide 2.. Functionally, part of the Sec protein translocase complex. Interacts with the SecYEG preprotein conducting channel. Has a central role in coupling the hydrolysis of ATP to the transfer of proteins into and across the cell membrane, serving both as a receptor for the preprotein-SecB complex and as an ATP-driven molecular motor driving the stepwise translocation of polypeptide chains across the membrane. This chain is Protein translocase subunit SecA, found in Dichelobacter nodosus (strain VCS1703A).